Reading from the N-terminus, the 101-residue chain is MAKLALINREEKRRKLVAQYAKKRAALEAIITNVSLSDEERYEARLKMQALPRNSSPSRLRNRCQLTGRPRGVFRKFGLCRHKIRELAFNGEVPGVVKASW.

It belongs to the universal ribosomal protein uS14 family. Part of the 30S ribosomal subunit. Contacts proteins S3 and S10.

In terms of biological role, binds 16S rRNA, required for the assembly of 30S particles and may also be responsible for determining the conformation of the 16S rRNA at the A site. The polypeptide is Small ribosomal subunit protein uS14 (Dechloromonas aromatica (strain RCB)).